We begin with the raw amino-acid sequence, 682 residues long: MLMRLLPLPSLTDGRPLGCCCTCQGSMKGDELKAQGPLPPQPLQGPLKGDKCEQPGLGPEPTAPQQHTEEEEALIEFHRSYRELFQFFCNNTTIHGAIRLVCSKHNRMKTAFWAVLWLCTFGMMYWQFALLFGEYFSYPVSLNINLNSDKLVFPAVTVCTLNPYRYKEIKEQLRELDRITQQTLFDLYNYNASSTLLAGARSRRSLADTLPYPLQRIPVQPEPRRARSSDPSSVRDNNPRVDRRDWRVGFQLCNQNKSDCFYQTSSSGVDGVREWYRFHYINILAQVADTSPRWEEETLGNFIFACRFNQAPCTQENYSHFHHPIYGNCYTFNNKNDSSLWMASMPGINNGLSLTLRTEQNDYIPLLSTVTGARVTVHGQDEPAFMDDGGFNLRPGVETSISMRKEALDRLGGSYGDCTQDGSDVPVQNLYPSKYTQQVCIHSCFQENMIKQCGCAYIFYPKPKGVEFCDYTNHSAWGYCYYKLQGAFSSDSLGCFNKCRKPCNVTIYKLSAGYSRWPSAASQDWIFQMLSLQNNYTISNKRNGVAKLNIYFKELNYRTNSESPSVTMVTLLSNLGSQWSLWFGSSVLSVVEMAEFMFDLLVITLLMLLRRFRSRYWSPGRGARAAREVACTPPPSLPSRFCAHSAFPTLTAPPPAYATLSACPPLQGLAGASSAACAPREP.

Residues Met1–Ala111 are Cytoplasmic-facing. The tract at residues Ala34–Glu69 is disordered. The helical transmembrane segment at Phe112–Phe132 threads the bilayer. The Extracellular segment spans residues Gly133–Ser586. 10 disulfides stabilise this stretch: Cys159/Cys329, Cys253/Cys260, Cys306/Cys313, Cys418/Cys503, Cys440/Cys480, Cys440/Cys499, Cys444/Cys495, Cys453/Cys480, Cys453/Cys503, and Cys455/Cys469. Residue Asn191 is glycosylated (N-linked (GlcNAc...) asparagine). The gating release of inhibition by proteolysis (GRIP); protease-sensitive region that is responsible for the proteolytic activation of the channel stretch occupies residues Arg201–Ser267. Residues Pro221–Arg240 are disordered. N-linked (GlcNAc...) asparagine glycosylation is present at Asn504. A helical membrane pass occupies residues Val587–Met607. The Cytoplasmic segment spans residues Leu608–Pro682. Residues Pro653–Tyr657 carry the PY motif; recruits WW domain-containing proteins and is thereby required for ubiquitination and inhibition of the channel by NEDD4 and NEDD4L motif.

This sequence belongs to the amiloride-sensitive sodium channel (TC 1.A.6) family. SCNN1A subfamily. As to quaternary structure, heterotrimer; containing an alpha/SCNN1A, a beta/SCNN1B and a gamma/SCNN1G subunit. Interacts with WWP1 (via WW domains). Interacts with WWP2 (via WW domains); inhibits the channel. Interacts with BPIFA1; the interaction is indirect via SCNN1B and inhibits the proteolytic processing of SCNN1A and SCNN1G and the activation of ENaC. Interacts with the full-length immature form of PCSK9 (pro-PCSK9). Ubiquitinated. Can be ubiquitinated at multiple sites and undergo monoubiquitination and polyubiquitination. Ubiquitination by NEDD4 or NEDD4L inhibits the ENaC channel through endocytosis, intracellular retention and degradation of its individual subunits. Post-translationally, N-glycosylated. In terms of processing, ENaC is activated through the proteolytic maturation of its subunits. Furin cleaves the SCNN1A subunit, which results in a stepwise increase in the open probability of the channel due to the release of an inhibitory tract. BPIFA1, which is recruited by the SCNN1B subunit, prevents the proteolytic activation of ENaC.

It localises to the apical cell membrane. The protein localises to the cell projection. Its subcellular location is the cilium. The protein resides in the cytoplasmic granule. It is found in the cytoplasm. It localises to the cytoplasmic vesicle. The protein localises to the secretory vesicle. Its subcellular location is the acrosome. The protein resides in the flagellum. The catalysed reaction is Na(+)(in) = Na(+)(out). With respect to regulation, originally identified and characterized by its inhibition by the diuretic drug amiloride. Functionally, this is one of the three pore-forming subunits of the heterotrimeric epithelial sodium channel (ENaC), a critical regulator of sodium balance and fluid homeostasis. ENaC operates in epithelial tissues, where it mediates the electrodiffusion of sodium ions from extracellular fluid through the apical membrane of cells, with water following osmotically. It plays a key role in maintaining sodium homeostasis through electrogenic sodium reabsorption in the kidneys. Additionally, ENaC is essential for airway surface liquid homeostasis, which is crucial for proper mucus clearance. The chain is Epithelial sodium channel subunit alpha from Cavia porcellus (Guinea pig).